The primary structure comprises 191 residues: HTH-type transcriptional regulator YjdC (191 aa).

The region spanning 1 to 60 (MQREDVLGEALKLLELQGIANTTLEMVAERVDYPLDELRRFWPDKEAILYDALRYLSQQI) is the HTH tetR-type domain.

The chain is HTH-type transcriptional regulator YjdC (yjdC) from Escherichia coli (strain K12).